A 128-amino-acid chain; its full sequence is uncharacterized protein (128 aa).

Residues 1–24 (MKMTKLTTLLLTATLGLASGAALA) form the signal peptide. 2 stretches are compositionally biased toward low complexity: residues 24-44 (AAES…NAGQ) and 52-70 (NVAP…GNTN). Residues 24–128 (AAESNAQSSN…VNTKTDGTTQ (105 aa)) are disordered. Residues 71 to 82 (STMQHPDGSTMN) are compositionally biased toward polar residues. The segment covering 85–110 (GMTKDEEHKNTMCKDGRCPDINKKVE) has biased composition (basic and acidic residues). The span at 113 to 128 (NGVNNDVNTKTDGTTQ) shows a compositional bias: polar residues.

This is an uncharacterized protein from Salmonella typhi.